The primary structure comprises 734 residues: DNA replication licensing factor MCM5 (734 aa).

S2 is subject to N-acetylserine. Positions 331–537 constitute an MCM domain; that stretch reads IYELISKSIA…RDVMLAKHVI (207 aa). Residue R371 coordinates ADP. 2 positions are modified to N6-acetyllysine: K392 and K396. An Arginine finger motif is present at residues 512–515; the sequence is SRFD. S605 carries the post-translational modification Phosphoserine.

It belongs to the MCM family. In terms of assembly, component of the MCM2-7 complex. The complex forms a toroidal hexameric ring with the proposed subunit order MCM2-MCM6-MCM4-MCM7-MCM3-MCM5. Component of the CMG helicase complex, a hexameric ring of related MCM2-7 subunits stabilized by CDC45 and the tetrameric GINS complex. Interacts with ANKRD17. Interacts with MCMBP. Interacts with TONSL; the interaction is direct.

The protein resides in the nucleus. Its subcellular location is the chromosome. It is found in the cytoplasm. The protein localises to the cytosol. It carries out the reaction ATP + H2O = ADP + phosphate + H(+). In terms of biological role, acts as a component of the MCM2-7 complex (MCM complex) which is the replicative helicase essential for 'once per cell cycle' DNA replication initiation and elongation in eukaryotic cells. Core component of CDC45-MCM-GINS (CMG) helicase, the molecular machine that unwinds template DNA during replication, and around which the replisome is built. The active ATPase sites in the MCM2-7 ring are formed through the interaction surfaces of two neighboring subunits such that a critical structure of a conserved arginine finger motif is provided in trans relative to the ATP-binding site of the Walker A box of the adjacent subunit. The six ATPase active sites, however, are likely to contribute differentially to the complex helicase activity. This is DNA replication licensing factor MCM5 from Bos taurus (Bovine).